We begin with the raw amino-acid sequence, 344 residues long: Glycerol-3-phosphate dehydrogenase [NAD(P)+] (344 aa).

NADPH is bound by residues serine 23, tryptophan 24, arginine 44, and lysine 118. Positions 118, 147, and 149 each coordinate sn-glycerol 3-phosphate. Residue alanine 151 participates in NADPH binding. Lysine 202, aspartate 255, serine 265, arginine 266, and asparagine 267 together coordinate sn-glycerol 3-phosphate. The Proton acceptor role is filled by lysine 202. Arginine 266 serves as a coordination point for NADPH. Glutamate 292 contacts NADPH.

It belongs to the NAD-dependent glycerol-3-phosphate dehydrogenase family.

Its subcellular location is the cytoplasm. The enzyme catalyses sn-glycerol 3-phosphate + NAD(+) = dihydroxyacetone phosphate + NADH + H(+). It carries out the reaction sn-glycerol 3-phosphate + NADP(+) = dihydroxyacetone phosphate + NADPH + H(+). Its pathway is membrane lipid metabolism; glycerophospholipid metabolism. Catalyzes the reduction of the glycolytic intermediate dihydroxyacetone phosphate (DHAP) to sn-glycerol 3-phosphate (G3P), the key precursor for phospholipid synthesis. The sequence is that of Glycerol-3-phosphate dehydrogenase [NAD(P)+] from Nitrosococcus oceani (strain ATCC 19707 / BCRC 17464 / JCM 30415 / NCIMB 11848 / C-107).